Reading from the N-terminus, the 421-residue chain is Probable pectate lyase C (421 aa).

Positions 1–19 (MQPLHTLLALLPLCRSTTA) are cleaved as a signal peptide. N-linked (GlcNAc...) asparagine glycans are attached at residues asparagine 164 and asparagine 201. Residue arginine 204 is part of the active site. Residues 257–292 (NENFHGYVENNYYDPDQDGTLNGNELGVSSSNYGGM) enclose the EF-hand domain. Residues aspartate 270, aspartate 272, aspartate 274, threonine 276, and glutamate 281 each coordinate Ca(2+). The tract at residues 353-376 (DFGGVGDLDGGETPTDTDGDGIPD) is disordered. Residues 367–376 (TDTDGDGIPD) are compositionally biased toward acidic residues.

The protein belongs to the polysaccharide lyase 1 family. Ca(2+) is required as a cofactor.

Its subcellular location is the secreted. The enzyme catalyses Eliminative cleavage of (1-&gt;4)-alpha-D-galacturonan to give oligosaccharides with 4-deoxy-alpha-D-galact-4-enuronosyl groups at their non-reducing ends.. Pectinolytic enzyme consist of four classes of enzymes: pectin lyase, polygalacturonase, pectin methylesterase and rhamnogalacturonase. Among pectinolytic enzymes, pectin lyase is the most important in depolymerization of pectin, since it cleaves internal glycosidic bonds of highly methylated pectins. Favors pectate, the anion, over pectin, the methyl ester. The chain is Probable pectate lyase C (plyC) from Emericella nidulans (strain FGSC A4 / ATCC 38163 / CBS 112.46 / NRRL 194 / M139) (Aspergillus nidulans).